The following is a 500-amino-acid chain: Beta-glucosidase 28 (500 aa).

The first 24 residues, 1 to 24, serve as a signal peptide directing secretion; sequence MDRRLLLSALLFIALACSSNRVHG. Residue glutamine 45 participates in a beta-D-glucoside binding. The N-linked (GlcNAc...) asparagine glycan is linked to asparagine 111. Residues histidine 146 and 191–192 contribute to the a beta-D-glucoside site; that span reads NE. Glutamate 192 serves as the catalytic Proton donor. Cysteine 211 and cysteine 219 are oxidised to a cystine. Tyrosine 337 lines the a beta-D-glucoside pocket. A glycan (N-linked (GlcNAc...) asparagine) is linked at asparagine 362. An a beta-D-glucoside-binding site is contributed by glutamate 408. The active-site Nucleophile is the glutamate 408. Asparagine 409, asparagine 415, and asparagine 416 each carry an N-linked (GlcNAc...) asparagine glycan. Residues tryptophan 457, 464–465, and phenylalanine 473 contribute to the a beta-D-glucoside site; that span reads EF.

This sequence belongs to the glycosyl hydrolase 1 family.

It carries out the reaction Hydrolysis of terminal, non-reducing beta-D-glucosyl residues with release of beta-D-glucose.. The polypeptide is Beta-glucosidase 28 (BGLU28) (Oryza sativa subsp. japonica (Rice)).